We begin with the raw amino-acid sequence, 222 residues long: Peroxiredoxin (222 aa).

One can recognise a Thioredoxin domain in the interval 2-157 (VVLGQKFPEV…ILRLVEALQT (156 aa)). Cys-44 serves as the catalytic Cysteine sulfenic acid (-SOH) intermediate. Substrate is bound at residue Arg-120. Cys-211 and Cys-217 form a disulfide bridge.

The protein belongs to the peroxiredoxin family. Prx6 subfamily. As to quaternary structure, homodecamer. Pentamer of dimers that assemble into a ring structure.

The protein resides in the cytoplasm. The catalysed reaction is a hydroperoxide + [thioredoxin]-dithiol = an alcohol + [thioredoxin]-disulfide + H2O. Thiol-specific peroxidase that catalyzes the reduction of hydrogen peroxide and organic hydroperoxides to water and alcohols, respectively. Plays a role in cell protection against oxidative stress by detoxifying peroxides. This is Peroxiredoxin from Nanoarchaeum equitans (strain Kin4-M).